A 377-amino-acid polypeptide reads, in one-letter code: Spore coat protein SA (377 aa).

The protein belongs to the glycosyltransferase group 1 family. Glycosyltransferase 4 subfamily.

The sequence is that of Spore coat protein SA (cotSA) from Bacillus subtilis (strain 168).